Here is a 430-residue protein sequence, read N- to C-terminus: CinA-like protein (430 aa).

It belongs to the CinA family.

The protein is CinA-like protein of Prochlorococcus marinus (strain NATL1A).